The primary structure comprises 854 residues: MRIAVTGASGVLGRGLTARLLSQGHEVVGIARHRPDSWPSSADFIAADIRDATAVESAMTGADVVAHCAWVRGRNDHINIDGTANVLKAMAETGTGRIVFTSSGHQPRVEQMLADCGLEWVAVRCALIFGRNVDNWVQRLFALPVLPAGYADRVVQVVHSDDAQRLLVRALLDTVIDSGPVNLAAPGELTFRRIAAALGRPMVPIGSPVLRRVTSFAELELLHSAPLMDVTLLRDRWGFQPAWNAEECLEDFTLAVRGRIGLGKRTFSLPWRLANIQDLPAVDSPADDGVAPRLAGPEGANGEFDTPIDPRFPTYLATNLSEALPGPFSPSSASVTVRGLRAGGVGIAERLRPSGVIQREIAMRTVAVFAHRLYGAITSAHFMAATVPFAKPATIVSNSGFFGPSMASLPIFGAQRPPSESSRARRWLRTLRNIGVFGVNLVGLSAGSPRDTDAYVADVDRLERLAFDNLATHDDRRLLSLILLARDHVVHGWVLASGSFMLCAAFNVLLRGLCGRDTAPAAGPELVSARSVEAVQRLVAAARRDPVVIRLLAEPGERLDKLAVEAPEFHSAVLAELTLIGHRGPAEVEMAATSYADNPELLVRMVAKTLRAVPAPQPPTPVIPLRAKPVALLAARQLRDREVRRDRMVRAIWVLRALLREYGRRLTEAGVFDTPDDVFYLLVDEIDALPADVSGLVARRRAEQRRLAGIVPPTVFSGSWEPSPSSAAALAAGDTLRGVGVCGGRVRGRVRIVRPETIDDLQPGEILVAEVTDVGYTAAFCYAAAVVTELGGPMSHAAVVAREFGFPCVVDAQGATRFLPPGALVEVDGATGEIHVVELASEDGPALPGSDLSR.

Belongs to the PEP-utilizing enzyme family.

This is an uncharacterized protein from Mycobacterium tuberculosis (strain CDC 1551 / Oshkosh).